The primary structure comprises 1532 residues: Glycogen debranching enzyme (1532 aa).

Serine 64 carries the phosphoserine modification. Active-site residues include aspartate 526, histidine 529, and aspartate 627.

The protein belongs to the glycogen debranching enzyme family. In terms of assembly, monomer. Interacts with NHLRC1/malin. Post-translationally, the N-terminus is blocked. In terms of processing, ubiquitinated. In terms of tissue distribution, liver, kidney and lymphoblastoid cells express predominantly isoform 1; whereas muscle and heart express not only isoform 1, but also muscle-specific isoform mRNAs (isoforms 2, 3 and 4). Isoforms 5 and 6 are present in both liver and muscle.

Its subcellular location is the cytoplasm. The enzyme catalyses Transfers a segment of a (1-&gt;4)-alpha-D-glucan to a new position in an acceptor, which may be glucose or a (1-&gt;4)-alpha-D-glucan.. It carries out the reaction Hydrolysis of (1-&gt;6)-alpha-D-glucosidic branch linkages in glycogen phosphorylase limit dextrin.. In terms of biological role, multifunctional enzyme acting as 1,4-alpha-D-glucan:1,4-alpha-D-glucan 4-alpha-D-glycosyltransferase and amylo-1,6-glucosidase in glycogen degradation. This chain is Glycogen debranching enzyme (AGL), found in Homo sapiens (Human).